A 69-amino-acid polypeptide reads, in one-letter code: Purkinje cell protein 4-like protein 1 (69 aa).

The span at 1-15 (MSELNTKTSPATNQA) shows a compositional bias: polar residues. Residues 1–47 (MSELNTKTSPATNQAPGPEEKGKAGSAKKTEDEEEEIDIDLTAPETE) are disordered. Thr-8 carries the phosphothreonine modification. Basic and acidic residues predominate over residues 18 to 31 (PEEKGKAGSAKKTE). An IQ domain is found at 46 to 69 (TEKAALAIQGKFRRFQKRKKDPSS).

This sequence belongs to the PCP4 family.

This is Purkinje cell protein 4-like protein 1 (PCP4L1) from Bos taurus (Bovine).